The sequence spans 341 residues: Phenylalanine--tRNA ligase alpha subunit (341 aa).

Mg(2+) is bound at residue glutamate 256.

It belongs to the class-II aminoacyl-tRNA synthetase family. Phe-tRNA synthetase alpha subunit type 1 subfamily. In terms of assembly, tetramer of two alpha and two beta subunits. Requires Mg(2+) as cofactor.

The protein localises to the cytoplasm. The enzyme catalyses tRNA(Phe) + L-phenylalanine + ATP = L-phenylalanyl-tRNA(Phe) + AMP + diphosphate + H(+). The protein is Phenylalanine--tRNA ligase alpha subunit (pheS) of Chlamydia muridarum (strain MoPn / Nigg).